The sequence spans 200 residues: uncharacterized protein (200 aa).

The chain crosses the membrane as a helical span at residues 104-124 (SNLLICFLFLCGLYHISVFTG).

It localises to the membrane. This is an uncharacterized protein from Escherichia coli (strain K12).